Reading from the N-terminus, the 185-residue chain is Ribosome-recycling factor (185 aa).

Belongs to the RRF family.

Its subcellular location is the cytoplasm. Its function is as follows. Responsible for the release of ribosomes from messenger RNA at the termination of protein biosynthesis. May increase the efficiency of translation by recycling ribosomes from one round of translation to another. In Nocardia farcinica (strain IFM 10152), this protein is Ribosome-recycling factor.